Consider the following 124-residue polypeptide: Fluoride-specific ion channel FluC (124 aa).

4 helical membrane passes run 4–24 (IVLL…LAGL), 35–55 (LGTF…WGVC), 67–87 (VVLL…TFES), and 96–116 (WLAF…LLWL). Na(+) contacts are provided by G75 and T78.

This sequence belongs to the fluoride channel Fluc/FEX (TC 1.A.43) family.

Its subcellular location is the cell inner membrane. The enzyme catalyses fluoride(in) = fluoride(out). Its activity is regulated as follows. Na(+) is not transported, but it plays an essential structural role and its presence is essential for fluoride channel function. Fluoride-specific ion channel. Important for reducing fluoride concentration in the cell, thus reducing its toxicity. The sequence is that of Fluoride-specific ion channel FluC from Nitratidesulfovibrio vulgaris (strain DSM 19637 / Miyazaki F) (Desulfovibrio vulgaris).